A 175-amino-acid chain; its full sequence is 3-hydroxyanthranilate 3,4-dioxygenase (175 aa).

R45 serves as a coordination point for O2. Positions 49, 55, and 93 each coordinate Fe cation. E55 lines the substrate pocket. Positions 97 and 107 each coordinate substrate. A divalent metal cation is bound by residues C122, C125, C159, and C162.

This sequence belongs to the 3-HAO family. Fe(2+) is required as a cofactor.

Its subcellular location is the cytoplasm. The catalysed reaction is 3-hydroxyanthranilate + O2 = (2Z,4Z)-2-amino-3-carboxymuconate 6-semialdehyde. It participates in cofactor biosynthesis; NAD(+) biosynthesis; quinolinate from L-kynurenine: step 3/3. Its function is as follows. Catalyzes the oxidative ring opening of 3-hydroxyanthranilate to 2-amino-3-carboxymuconate semialdehyde, which spontaneously cyclizes to quinolinate. This is 3-hydroxyanthranilate 3,4-dioxygenase from Lodderomyces elongisporus (strain ATCC 11503 / CBS 2605 / JCM 1781 / NBRC 1676 / NRRL YB-4239) (Yeast).